Reading from the N-terminus, the 150-residue chain is Catabolic 3-dehydroquinase 2 (150 aa).

Y23 acts as the Proton acceptor in catalysis. Positions 74, 80, and 87 each coordinate substrate. The active-site Proton donor is H100. Residues 101-102 (IT) and R111 each bind substrate.

It belongs to the type-II 3-dehydroquinase family. Homododecamer. Adopts a ring-like structure, composed of an arrangement of two hexameric rings stacked on top of one another.

It catalyses the reaction 3-dehydroquinate = 3-dehydroshikimate + H2O. It participates in aromatic compound metabolism; 3,4-dihydroxybenzoate biosynthesis; 3,4-dihydroxybenzoate from 3-dehydroquinate: step 1/2. In terms of biological role, is involved in the catabolism of quinate. Allows the utilization of quinate as carbon source via the beta-ketoadipate pathway. This is Catabolic 3-dehydroquinase 2 from Aspergillus fumigatus (strain ATCC MYA-4609 / CBS 101355 / FGSC A1100 / Af293) (Neosartorya fumigata).